The chain runs to 310 residues: Beta-ketoacyl-[acyl-carrier-protein] synthase III 1 (310 aa).

Residues Cys112 and His235 contribute to the active site. Residues 236-240 are ACP-binding; that stretch reads QANIR. Asn265 is a catalytic residue.

This sequence belongs to the thiolase-like superfamily. FabH family. Homodimer.

It localises to the cytoplasm. It carries out the reaction malonyl-[ACP] + acetyl-CoA + H(+) = 3-oxobutanoyl-[ACP] + CO2 + CoA. Its pathway is lipid metabolism; fatty acid biosynthesis. Its function is as follows. Catalyzes the condensation reaction of fatty acid synthesis by the addition to an acyl acceptor of two carbons from malonyl-ACP. Catalyzes the first condensation reaction which initiates fatty acid synthesis and may therefore play a role in governing the total rate of fatty acid production. Possesses both acetoacetyl-ACP synthase and acetyl transacylase activities. Its substrate specificity determines the biosynthesis of branched-chain and/or straight-chain of fatty acids. This is Beta-ketoacyl-[acyl-carrier-protein] synthase III 1 from Bacillus cereus (strain ATCC 14579 / DSM 31 / CCUG 7414 / JCM 2152 / NBRC 15305 / NCIMB 9373 / NCTC 2599 / NRRL B-3711).